We begin with the raw amino-acid sequence, 394 residues long: 1-deoxy-D-xylulose 5-phosphate reductoisomerase (394 aa).

The NADPH site is built by threonine 12, glycine 13, serine 14, isoleucine 15, lysine 39, glutamine 40, and asparagine 126. Lysine 127 lines the 1-deoxy-D-xylulose 5-phosphate pocket. Glutamate 128 contacts NADPH. Aspartate 152 contributes to the Mn(2+) binding site. Serine 153, glutamate 154, serine 183, and histidine 206 together coordinate 1-deoxy-D-xylulose 5-phosphate. Glutamate 154 contacts Mn(2+). An NADPH-binding site is contributed by glycine 212. Positions 219, 224, 225, and 228 each coordinate 1-deoxy-D-xylulose 5-phosphate. Mn(2+) is bound at residue glutamate 228.

This sequence belongs to the DXR family. Mg(2+) is required as a cofactor. Mn(2+) serves as cofactor.

It carries out the reaction 2-C-methyl-D-erythritol 4-phosphate + NADP(+) = 1-deoxy-D-xylulose 5-phosphate + NADPH + H(+). The protein operates within isoprenoid biosynthesis; isopentenyl diphosphate biosynthesis via DXP pathway; isopentenyl diphosphate from 1-deoxy-D-xylulose 5-phosphate: step 1/6. Functionally, catalyzes the NADPH-dependent rearrangement and reduction of 1-deoxy-D-xylulose-5-phosphate (DXP) to 2-C-methyl-D-erythritol 4-phosphate (MEP). The protein is 1-deoxy-D-xylulose 5-phosphate reductoisomerase of Neisseria gonorrhoeae (strain ATCC 700825 / FA 1090).